A 157-amino-acid polypeptide reads, in one-letter code: SsrA-binding protein (157 aa).

The tract at residues 133–157 (LHDKRESEKKRDWGREKGRLLRARG) is disordered. The span at 135–151 (DKRESEKKRDWGREKGR) shows a compositional bias: basic and acidic residues.

This sequence belongs to the SmpB family.

The protein localises to the cytoplasm. Required for rescue of stalled ribosomes mediated by trans-translation. Binds to transfer-messenger RNA (tmRNA), required for stable association of tmRNA with ribosomes. tmRNA and SmpB together mimic tRNA shape, replacing the anticodon stem-loop with SmpB. tmRNA is encoded by the ssrA gene; the 2 termini fold to resemble tRNA(Ala) and it encodes a 'tag peptide', a short internal open reading frame. During trans-translation Ala-aminoacylated tmRNA acts like a tRNA, entering the A-site of stalled ribosomes, displacing the stalled mRNA. The ribosome then switches to translate the ORF on the tmRNA; the nascent peptide is terminated with the 'tag peptide' encoded by the tmRNA and targeted for degradation. The ribosome is freed to recommence translation, which seems to be the essential function of trans-translation. The chain is SsrA-binding protein from Nitrobacter winogradskyi (strain ATCC 25391 / DSM 10237 / CIP 104748 / NCIMB 11846 / Nb-255).